We begin with the raw amino-acid sequence, 639 residues long: ATP-dependent zinc metalloprotease FtsH (639 aa).

The Cytoplasmic portion of the chain corresponds to 1–4 (MNST). A helical transmembrane segment spans residues 5–25 (VKTIVFWVFILACCILLWQVF). At 26–104 (QRSSNTGKEQ…TVKDNSGSPW (79 aa)) the chain is on the periplasmic side. A helical transmembrane segment spans residues 105–125 (WSILIQFSPVLVLVALWFFMI). The Cytoplasmic portion of the chain corresponds to 126 to 639 (RQMQSGGNKA…GLPEGSPSPA (514 aa)). ATP is bound at residue 196–203 (GPPGTGKT). H418 provides a ligand contact to Zn(2+). The active site involves E419. Zn(2+) is bound by residues H422 and D494. A disordered region spans residues 597–639 (KDLPPLKPSGGSGTATTDDVQQVLKPSSDRGAGGLPEGSPSPA).

This sequence in the central section; belongs to the AAA ATPase family. In the C-terminal section; belongs to the peptidase M41 family. In terms of assembly, homohexamer. Zn(2+) is required as a cofactor.

The protein localises to the cell inner membrane. In terms of biological role, acts as a processive, ATP-dependent zinc metallopeptidase for both cytoplasmic and membrane proteins. Plays a role in the quality control of integral membrane proteins. This is ATP-dependent zinc metalloprotease FtsH from Acidobacterium capsulatum (strain ATCC 51196 / DSM 11244 / BCRC 80197 / JCM 7670 / NBRC 15755 / NCIMB 13165 / 161).